The sequence spans 1086 residues: Auxin response factor 19 (1086 aa).

Residues 126–228 constitute a DNA-binding region (TF-B3); it reads FCKTLTASDT…QLMLGIRRAN (103 aa). Polar residues predominate over residues 454–485; it reads PSKLLNFQSPNLSSANSQFNKPNTVNHISQQM. 4 disordered regions span residues 454-504, 545-564, 624-647, and 659-788; these read PSKL…QQQQ, QSPN…QSML, LSQN…QQLQ, and QQQS…SVFE. Residues 486–504 are compositionally biased toward low complexity; that stretch reads QAQPAMVKSQQQQQQQQQQ. Over residues 659–697 the composition is skewed to low complexity; it reads QQQSIPPVSSSLQPQLSALQQTQSHQLQQLLSSQNQQPL. Over residues 700-710 the composition is skewed to polar residues; that stretch reads GNNSFPASTFM. Low complexity predominate over residues 711–724; that stretch reads QPPQIQVSPQQQGQ. The segment covering 747–771 has biased composition (polar residues); the sequence is SCSTSPSANNTGHDNVSPTNFLSRN. Residues 772 to 785 show a composition bias toward low complexity; it reads QQQGQAASVSASDS. One can recognise a PB1 domain in the interval 958 to 1051; sequence RTYTKVQKRG…EVQQMSLDGD (94 aa).

It belongs to the ARF family. In terms of assembly, homodimers and heterodimers. Interacts with the auxin-responsive protein IAA1. Binds to JMJ30. Binds to ATXR2 in the nucleus.

The protein resides in the nucleus. Its function is as follows. Auxin response factors (ARFs) are transcriptional factors that bind specifically to the DNA sequence 5'-TGTCTC-3' found in the auxin-responsive promoter elements (AuxREs). Could act as transcriptional activator or repressor. Formation of heterodimers with Aux/IAA proteins may alter their ability to modulate early auxin response genes expression. Involved in ethylene responses. Regulates lateral root formation through direct regulation of LBD16 and/or LBD29. Functionally redundant with ARF7. Involved in cellular dedifferentiation during callus formation on callus-inducing medium (CIM) and in an ATXR2-dependent manner. This is Auxin response factor 19 from Arabidopsis thaliana (Mouse-ear cress).